A 652-amino-acid polypeptide reads, in one-letter code: DNA ligase (652 aa).

Residues 29–33 (DSDYD), 78–79 (SL), and E107 contribute to the NAD(+) site. K109 functions as the N6-AMP-lysine intermediate in the catalytic mechanism. Residues R130, E164, K278, and K302 each contribute to the NAD(+) site. The Zn(2+) site is built by C395, C398, C413, and C418. The region spanning 577–652 (NSDAALFGLT…IEDEDWLRQL (76 aa)) is the BRCT domain.

The protein belongs to the NAD-dependent DNA ligase family. LigA subfamily. It depends on Mg(2+) as a cofactor. Requires Mn(2+) as cofactor.

The enzyme catalyses NAD(+) + (deoxyribonucleotide)n-3'-hydroxyl + 5'-phospho-(deoxyribonucleotide)m = (deoxyribonucleotide)n+m + AMP + beta-nicotinamide D-nucleotide.. Its function is as follows. DNA ligase that catalyzes the formation of phosphodiester linkages between 5'-phosphoryl and 3'-hydroxyl groups in double-stranded DNA using NAD as a coenzyme and as the energy source for the reaction. It is essential for DNA replication and repair of damaged DNA. The sequence is that of DNA ligase from Streptococcus pyogenes serotype M3 (strain ATCC BAA-595 / MGAS315).